Reading from the N-terminus, the 462-residue chain is Nuclear factor interleukin-3-regulated protein (462 aa).

Lysine 24 participates in a covalent cross-link: Glycyl lysine isopeptide (Lys-Gly) (interchain with G-Cter in SUMO2). One can recognise a bZIP domain in the interval 73-136 (DAMYWEKRRK…GLISSTAYAQ (64 aa)). The tract at residues 79-95 (KRRKNNEAAKRSREKRR) is basic motif. Residues 99 to 106 (LVLENKLI) are leucine-zipper. Disordered stretches follow at residues 189-236 (DVSE…RDDR) and 254-303 (GYSH…HSPV). Lysine 214 is covalently cross-linked (Glycyl lysine isopeptide (Lys-Gly) (interchain with G-Cter in SUMO2)). Lysine 219 participates in a covalent cross-link: Glycyl lysine isopeptide (Lys-Gly) (interchain with G-Cter in SUMO1); alternate. A Glycyl lysine isopeptide (Lys-Gly) (interchain with G-Cter in SUMO2); alternate cross-link involves residue lysine 219. Positions 227–236 (SYAREPRDDR) are enriched in basic and acidic residues. A compositionally biased stretch (polar residues) spans 264–274 (VNRSSSNSPRT). Serine 301 carries the post-translational modification Phosphoserine. Glycyl lysine isopeptide (Lys-Gly) (interchain with G-Cter in SUMO2) cross-links involve residues lysine 314, lysine 326, lysine 332, lysine 337, and lysine 350. At serine 353 the chain carries Phosphoserine. Glycyl lysine isopeptide (Lys-Gly) (interchain with G-Cter in SUMO2) cross-links involve residues lysine 360, lysine 394, lysine 401, lysine 406, lysine 412, lysine 419, lysine 424, lysine 434, and lysine 448.

The protein belongs to the bZIP family. NFIL3 subfamily. As to quaternary structure, homodimer. Binds DNA as a dimer. Interacts with CRY2, DR1 and PER2. Interacts with NR0B2. Interacts with MYSM1.

The protein localises to the nucleus. Its function is as follows. Acts as a transcriptional regulator that recognizes and binds to the sequence 5'-[GA]TTA[CT]GTAA[CT]-3', a sequence present in many cellular and viral promoters. Represses transcription from promoters with activating transcription factor (ATF) sites. Represses promoter activity in osteoblasts. Represses transcriptional activity of PER1. Represses transcriptional activity of PER2 via the B-site on the promoter. Activates transcription from the interleukin-3 promoter in T-cells. Competes for the same consensus-binding site with PAR DNA-binding factors (DBP, HLF and TEF). Component of the circadian clock that acts as a negative regulator for the circadian expression of PER2 oscillation in the cell-autonomous core clock. Protects pro-B cells from programmed cell death. Represses the transcription of CYP2A5. Positively regulates the expression and activity of CES2 by antagonizing the repressive action of NR1D1 on CES2. Required for the development of natural killer cell precursors. In Bos taurus (Bovine), this protein is Nuclear factor interleukin-3-regulated protein (NFIL3).